The sequence spans 145 residues: Ribonuclease VapC7 (145 aa).

The PINc domain maps to 2-129; it reads IVLDTTVLVY…PAFADLSDVV (128 aa). Mg(2+) is bound by residues aspartate 5 and aspartate 100.

The protein belongs to the PINc/VapC protein family. Mg(2+) is required as a cofactor.

In terms of biological role, toxic component of a type II toxin-antitoxin (TA) system. An RNase. The cognate antitoxin is VapB7. In Mycobacterium tuberculosis (strain ATCC 25618 / H37Rv), this protein is Ribonuclease VapC7.